Consider the following 439-residue polypeptide: MQAEMNQSAEVTMKTFFTMKTRETHPQAFVAPMATATMMPIDTGDNSTEAGVPGEGKNDVFEKLKEKFMNELQKIPLPPWALIAIAIVSGLLLLTCCLCICKKCCCKKKKNKKEKGKGKKNDINMKDVKGSGGNQDDDDAETGLTEGEDKEEEAKEEEKLGKIQFSLDYDFQANQLTVGIIQAAELPALDMGGTSDPYVKVFLLPDKKKKYETKVQKKTLNPTFNESFVFKVPYQELGGKTLMMAVYDFDRFSKHDCIGQVTVLMTKVDLGQQLEEWRDLESAEKEEPEKLGDICTSLRYVPTAGKLTVCILEAKNLKKMDVGGLSDPYVKIHLLQNGKRLKKKKTTVKKNTLNPYYNESFSFEIPFEQIQKVQVCVTVLDYDKIGKNDAIGKIFVGSNASGTELRHWSDMLANPRRPIAQWHSLKPEEEVDVALGLKK.

Over 1 to 74 (MQAEMNQSAE…KEKFMNELQK (74 aa)) the chain is Vesicular. N-linked (GlcNAc...) asparagine glycosylation is found at Asn-6 and Asn-46. A helical transmembrane segment spans residues 75–101 (IPLPPWALIAIAIVSGLLLLTCCLCIC). The Cytoplasmic segment spans residues 102-439 (KKCCCKKKKN…EVDVALGLKK (338 aa)). Positions 113–155 (KEKGKGKKNDINMKDVKGSGGNQDDDDAETGLTEGEDKEEEAK) are disordered. A compositionally biased stretch (basic and acidic residues) spans 119–129 (KKNDINMKDVK). Residues 135 to 151 (QDDDDAETGLTEGEDKE) show a composition bias toward acidic residues. Positions 153–399 (EAKEEEKLGK…AIGKIFVGSN (247 aa)) are phospholipid binding. 2 consecutive C2 domains span residues 159–278 (KLGK…EEWR) and 290–423 (KLGD…AQWH). Leu-189, Asp-190, Asp-196, Asp-248, Phe-249, Asp-250, Ser-253, Lys-254, Asp-256, Asp-321, Asp-327, Asp-381, Asp-383, and Asp-389 together coordinate Ca(2+).

The protein belongs to the synaptotagmin family. Homodimer or homotrimer (possible). Ca(2+) serves as cofactor. In terms of tissue distribution, spinal cord, brainstem, midbrain and electric organ.

Its subcellular location is the cytoplasmic vesicle. It is found in the secretory vesicle. The protein resides in the synaptic vesicle membrane. It localises to the synapse. In terms of biological role, may have a regulatory role in the membrane interactions during trafficking of synaptic vesicles at the active zone of the synapse. It binds acidic phospholipids with a specificity that requires the presence of both an acidic head group and a diacyl backbone. In Diplobatis ommata (Ocellated electric ray), this protein is Synaptotagmin-B (P65-B).